Reading from the N-terminus, the 422-residue chain is Metallocarboxypeptidase A (422 aa).

Positions 1–17 are cleaved as a signal peptide; the sequence is MRSVLSFALLAANVVSA. The propeptide at 18–112 is activation peptide; it reads AVLAPFDYSG…FEAYSAGYAP (95 aa). The region spanning 119-419 is the Peptidase M14 domain; that stretch reads SYHSYQDHLS…AGTVAMLKAV (301 aa). His179 and Glu182 together coordinate Zn(2+). Substrate contacts are provided by residues 179-182, Arg237, and 254-255; these read HARE and NR. The cysteines at positions 248 and 271 are disulfide-linked. His309 contributes to the Zn(2+) binding site. 310 to 311 contributes to the substrate binding site; the sequence is SY. Glu385 functions as the Proton donor/acceptor in the catalytic mechanism.

The protein belongs to the peptidase M14 family. The cofactor is Zn(2+).

Its subcellular location is the secreted. Functionally, extracellular metalloprotease that contributes to pathogenicity. The polypeptide is Metallocarboxypeptidase A (MCPA) (Arthroderma otae (strain ATCC MYA-4605 / CBS 113480) (Microsporum canis)).